The sequence spans 91 residues: Metalloproteinase inhibitor 2 (91 aa).

The region spanning Lys-1–Thr-91 is the NTR domain.

It belongs to the protease inhibitor I35 (TIMP) family. In terms of processing, the activity of TIMP2 is dependent on the presence of disulfide bonds.

Its subcellular location is the secreted. Its function is as follows. Complexes with metalloproteinases (such as collagenases) and irreversibly inactivates them. The chain is Metalloproteinase inhibitor 2 (TIMP2) from Equus caballus (Horse).